A 528-amino-acid chain; its full sequence is Ceramide glucosyltransferase (528 aa).

Over 1–6 the chain is Lumenal; the sequence is MYSFIE. The helical transmembrane segment at 7–27 threads the bilayer; the sequence is CIAGALFVLGCVVVTLVVIGV. The Cytoplasmic portion of the chain corresponds to 28-369; the sequence is RALLYNFRNR…TVLSATILEP (342 aa). Residue aspartate 94 is a short sequence motif, D1. Residue aspartate 154 is a short sequence motif, D2. Residue aspartate 308 is a short sequence motif, D3. The active-site Proton acceptor is the aspartate 308. The short motif at 349-353 is the (Q/R)XXRW element; sequence RRSRW. Residues 370–390 form a helical membrane-spanning segment; sequence FTECFLFATYMSLAMTTIPVL. The Lumenal portion of the chain corresponds to 391–402; it reads SQNLGIPKTWNA. A helical transmembrane segment spans residues 403-423; sequence TAIAWFTITTLWMLIDYIGYL. Topologically, residues 424–457 are cytoplasmic; sequence RLHSGVTMEVDEHTPYFAKGFKNTGGIKRRPFLE. Residues 458 to 478 traverse the membrane as a helical segment; it reads FLAAWIGREGLAFPVWAYAVV. At 479 to 528 the chain is on the lumenal side; sequence FGNTVNWRGRLFYIHWDTTVDAVEPREERTREVRTPELERGPSRNKHRVD. A disordered region spans residues 503-528; sequence PREERTREVRTPELERGPSRNKHRVD.

It belongs to the glycosyltransferase 2 family.

Its subcellular location is the golgi apparatus membrane. It carries out the reaction an N-acylsphing-4-enine + UDP-alpha-D-glucose = a beta-D-glucosyl-(1&lt;-&gt;1')-N-acylsphing-4-enine + UDP + H(+). Its pathway is lipid metabolism; sphingolipid metabolism. Catalyzes the final step in the biosynthesis of the membrane lipid glucosylceramide (GluCer), the transfer of glucose to ceramide. Glucosylceramides play important roles in growth, differentiation and pathogenicity. Contribution to fungal pathogenesis is host-dependent. This is Ceramide glucosyltransferase from Gibberella zeae (strain ATCC MYA-4620 / CBS 123657 / FGSC 9075 / NRRL 31084 / PH-1) (Wheat head blight fungus).